Here is a 534-residue protein sequence, read N- to C-terminus: Glucans biosynthesis protein D (534 aa).

The segment at residues 1–30 is a signal peptide (tat-type signal); sequence MRMQRRHLLKNAAAALAALGLPALPQWALA.

Belongs to the OpgD/OpgG family. Post-translationally, predicted to be exported by the Tat system. The position of the signal peptide cleavage has not been experimentally proven.

It localises to the periplasm. Its pathway is glycan metabolism; osmoregulated periplasmic glucan (OPG) biosynthesis. Its function is as follows. Probably involved in the control of the structural glucose backbone of osmoregulated periplasmic glucans (OPGs). In Xanthomonas oryzae pv. oryzae (strain PXO99A), this protein is Glucans biosynthesis protein D.